Reading from the N-terminus, the 150-residue chain is Ribosome-binding factor A (150 aa).

The interval 119 to 150 is disordered; that stretch reads VAERAKSAQPAGEPDPYRFDGAAAADDDEPAT.

This sequence belongs to the RbfA family. As to quaternary structure, monomer. Binds 30S ribosomal subunits, but not 50S ribosomal subunits or 70S ribosomes.

The protein localises to the cytoplasm. Its function is as follows. One of several proteins that assist in the late maturation steps of the functional core of the 30S ribosomal subunit. Associates with free 30S ribosomal subunits (but not with 30S subunits that are part of 70S ribosomes or polysomes). Required for efficient processing of 16S rRNA. May interact with the 5'-terminal helix region of 16S rRNA. This chain is Ribosome-binding factor A, found in Acidothermus cellulolyticus (strain ATCC 43068 / DSM 8971 / 11B).